We begin with the raw amino-acid sequence, 286 residues long: 4-hydroxybenzoate octaprenyltransferase (286 aa).

Transmembrane regions (helical) follow at residues 19–39 (AGWL…SHGF), 42–62 (WHLL…GCCV), 92–112 (ALVL…TTNA), 115–135 (IAWS…KRYV), 137–157 (MPQA…FAAV), 161–181 (VPLL…AYDT), 206–226 (FDVA…ALAL), 233–253 (AIYW…GWLI), and 264–284 (AFRL…LSYL).

This sequence belongs to the UbiA prenyltransferase family. It depends on Mg(2+) as a cofactor.

The protein localises to the cell inner membrane. It catalyses the reaction all-trans-octaprenyl diphosphate + 4-hydroxybenzoate = 4-hydroxy-3-(all-trans-octaprenyl)benzoate + diphosphate. It participates in cofactor biosynthesis; ubiquinone biosynthesis. Functionally, catalyzes the prenylation of para-hydroxybenzoate (PHB) with an all-trans polyprenyl group. Mediates the second step in the final reaction sequence of ubiquinone-8 (UQ-8) biosynthesis, which is the condensation of the polyisoprenoid side chain with PHB, generating the first membrane-bound Q intermediate 3-octaprenyl-4-hydroxybenzoate. The sequence is that of 4-hydroxybenzoate octaprenyltransferase from Polaromonas sp. (strain JS666 / ATCC BAA-500).